A 122-amino-acid polypeptide reads, in one-letter code: Large ribosomal subunit protein uL14 (122 aa).

This sequence belongs to the universal ribosomal protein uL14 family. As to quaternary structure, part of the 50S ribosomal subunit. Forms a cluster with proteins L3 and L19. In the 70S ribosome, L14 and L19 interact and together make contacts with the 16S rRNA in bridges B5 and B8.

Binds to 23S rRNA. Forms part of two intersubunit bridges in the 70S ribosome. The chain is Large ribosomal subunit protein uL14 from Acetivibrio thermocellus (strain ATCC 27405 / DSM 1237 / JCM 9322 / NBRC 103400 / NCIMB 10682 / NRRL B-4536 / VPI 7372) (Clostridium thermocellum).